A 662-amino-acid chain; its full sequence is Acyl-coenzyme A oxidase acox-1.4 (662 aa).

FAD is bound by residues 148–151 (YAQT), 156–157 (GT), and G190. Residues 284–287 (KVNH) and R294 contribute to the substrate site. Residues R319 and 339-342 (QQHR) contribute to the FAD site. The ATP site is built by H341, S391, H395, and Q403. Residue G410 coordinates FAD. Position 432–433 (432–433 (YE)) interacts with substrate. E433 functions as the Proton acceptor in the catalytic mechanism. E435 is an FAD binding site. Residues 526-529 (RASR) and Y574 contribute to the ATP site. Residues 660 to 662 (AKL) carry the Microbody targeting signal motif.

This sequence belongs to the acyl-CoA oxidase family. As to quaternary structure, homodimer. It depends on FAD as a cofactor.

Its subcellular location is the peroxisome. The catalysed reaction is asc-C9-CoA + O2 = asc-DeltaC9-CoA + H2O2. Its pathway is lipid metabolism; peroxisomal fatty acid beta-oxidation. With respect to regulation, activated by ATP. ATP binding leads to a conformational change that promotes FAD cofactor binding and enzyme activity. ATP binding likely occurs during acox-1.4 folding and/or dimer formation. Functionally, involved in the first step of peroxisomal beta-oxidation by catalyzing the desaturation of fatty acid-derived side chains of ascaroside pheromones, which regulates development and behavior. Specifically, shortens ascarosides with a 9-carbon side chain (asc-C9) and, in association with acox-1.1, may contribute to the shortening of ascarosides with a 11-carbon side chain (asc-C11). May contribute to the production of indol-3-carbonyl(IC)-ascarosides in association with acox-1.1 and acox-3. The chain is Acyl-coenzyme A oxidase acox-1.4 from Caenorhabditis elegans.